Here is a 60-residue protein sequence, read N- to C-terminus: Potassium channel toxin alpha-KTx 12.5 (60 aa).

The N-terminal stretch at 1 to 22 (MNKLPILIFMLLVCSMFISSDC) is a signal peptide. 3 disulfides stabilise this stretch: Cys-30-Cys-51, Cys-36-Cys-56, and Cys-40-Cys-58.

This sequence belongs to the short scorpion toxin superfamily. Potassium channel inhibitor family. Alpha-KTx 12 subfamily. As to expression, expressed by the venom gland.

The protein localises to the secreted. This recombinant toxin inhibits the mammalian voltage-gated potassium channels Kv1.3/KCNA3 (IC(50)=28 nM). Kv1.1/KCNA1 and Kv1.2/KCNA2 potassium channels are also weakly inhibited (IC(50)=1.73 uM and IC(50)=12.63 uM, respectively). The sequence is that of Potassium channel toxin alpha-KTx 12.5 from Lychas mucronatus (Chinese swimming scorpion).